A 451-amino-acid polypeptide reads, in one-letter code: MDGNDHKVENLGDVDKFYSRIRWNNQFSYMATLPPHLQSEMEGQKSLLMRYDTYRKESSSFSGEGKKVTLQHVPTDFSEASQAVISKKDHDTHASAFVNKIFQPEVAEELIVNRYEKLLSQRPEWHAPWKLSRVINGHLGWVRCVAIDPVDNEWFITGSNDTTMKVWDLATGKLKTTLAGHVMTVRDVAVSDRHPYLFSVSEDKTVKCWDLEKNQIIRDYYGHLSGVRTVSIHPTLDLIATAGRDSVIKLWDMRTRIPVITLVGHKGPINQVQCTPVDPQVVSSSTDATVRLWDVVAGKTMKVLTHHKRSVRATALHPKEFSVASACTDDIRSWGLAEGSLLTNFESEKTGIINTLSINQDDVLFAGGDNGVLSFYDYKSGHKYQSLATREMVGSLEGERSVLCSTFDKTGLRLITGEADKSIKIWKQDETATKESEPGLAWNPNLSAKRF.

WD repeat units follow at residues 137–168 (GHLG…KVWD), 180–210 (GHVM…KCWD), 222–252 (GHLS…KLWD), 264–294 (GHKG…RLWD), 306–335 (HHKR…RSWG), 348–377 (EKTG…SFYD), and 397–427 (EGER…KIWK).

The protein belongs to the WD repeat PRL1/PRL2 family. In terms of assembly, belongs to the CWC complex (or CEF1-associated complex), a spliceosome subcomplex composed of the U2, U5 and U6 snRNAs and at least BUD13, BUD31, BRR2, CDC40, CEF1, CLF1, CUS1, CWC2, CWC15, CWC21, CWC22, CWC23, CWC24, CWC25, CWC27, ECM2, HSH155, IST3, ISY1, LEA1, MSL1, NTC20, PRP8, PRP9, PRP11, PRP19, PRP21, PRP22, PRP45, PRP46, SLU7, SMB1, SMD1, SMD2, SMD3, SMX2, SMX3, SNT309, SNU114, SPP2, SYF1, SYF2, RSE1 and YJU2. Interacts with CEF1, CLF1, NTC20, PRP45 and SYF1.

Its subcellular location is the cytoplasm. The protein localises to the nucleus. Involved in pre-mRNA splicing. May also be required for cell cycle progression at G2/M. The sequence is that of Pre-mRNA-splicing factor PRP46 (PRP46) from Saccharomyces cerevisiae (strain ATCC 204508 / S288c) (Baker's yeast).